The chain runs to 357 residues: Tetraacyldisaccharide 4'-kinase (357 aa).

ATP is bound at residue 67–74 (SVGGTGKT).

It belongs to the LpxK family.

The catalysed reaction is a lipid A disaccharide + ATP = a lipid IVA + ADP + H(+). It functions in the pathway glycolipid biosynthesis; lipid IV(A) biosynthesis; lipid IV(A) from (3R)-3-hydroxytetradecanoyl-[acyl-carrier-protein] and UDP-N-acetyl-alpha-D-glucosamine: step 6/6. Transfers the gamma-phosphate of ATP to the 4'-position of a tetraacyldisaccharide 1-phosphate intermediate (termed DS-1-P) to form tetraacyldisaccharide 1,4'-bis-phosphate (lipid IVA). The polypeptide is Tetraacyldisaccharide 4'-kinase (Syntrophotalea carbinolica (strain DSM 2380 / NBRC 103641 / GraBd1) (Pelobacter carbinolicus)).